A 133-amino-acid chain; its full sequence is Profilin (133 aa).

This sequence belongs to the profilin family.

Functionally, more likely to influence phosphoinositide metabolism than actin assembly. This chain is Profilin, found in Vaccinia virus (strain Tian Tan) (VACV).